Here is a 60-residue protein sequence, read N- to C-terminus: MAVQQNKKSPSKRGMHRSHNALTVPGIAVESTTGETHLRHHISPTGFYRGRKVLKTKSEA.

A disordered region spans residues 1 to 60; the sequence is MAVQQNKKSPSKRGMHRSHNALTVPGIAVESTTGETHLRHHISPTGFYRGRKVLKTKSEA. 2 stretches are compositionally biased toward basic residues: residues 9-19 and 49-60; these read SPSKRGMHRSH and RGRKVLKTKSEA.

Belongs to the bacterial ribosomal protein bL32 family.

This is Large ribosomal subunit protein bL32 from Polaromonas sp. (strain JS666 / ATCC BAA-500).